Reading from the N-terminus, the 668-residue chain is Acyl-CoA-binding domain-containing protein 4 (668 aa).

An ACB domain is found at 12–106; it reads YPERFYAAAS…LEEDDPGWYS (95 aa). Residues Lys-33, 48–52, and Lys-74 contribute to the an acyl-CoA site; that span reads YALYQ. 6 Kelch repeats span residues 195-242, 255-305, 307-356, 358-407, 408-456, and 463-508; these read KMYI…TLLA, KLLS…MVGK, LVIF…VHAE, FLLI…TIGE, NWFI…LVVS, and VLVA…VNNA. A phosphoserine mark is found at Ser-515 and Ser-520. Residues 538-647 adopt a coiled-coil conformation; the sequence is KVEGNSERII…EQAAMNAKRQ (110 aa). The segment at 639–668 is disordered; that stretch reads QAAMNAKRQGSGGVWGWLAGSPQEKDDDSP.

This sequence belongs to the ACBP family. In terms of assembly, interacts with RAP2-3/EBP, an ethylene-responsive element binding protein. As to expression, mostly expressed in roots, stems, and leaves, and, to a lower extent, in flowers and siliques.

The protein resides in the cytoplasm. Its function is as follows. Binds medium- and long-chain acyl-CoA esters with very high affinity. Can interact in vitro with oleoyl-CoA, barely with palmitoyl-CoA, but not with arachidonyl-CoA. May function as an intracellular carrier of acyl-CoA esters. Plays a role in the biosynthesis of membrane lipids including galactolipids and phospholipids. The protein is Acyl-CoA-binding domain-containing protein 4 (ACBP4) of Arabidopsis thaliana (Mouse-ear cress).